A 477-amino-acid polypeptide reads, in one-letter code: AAA-ATPase At3g28600 (477 aa).

An N-terminal signal peptide occupies residues methionine 1–proline 26. Glycine 245–serine 252 lines the ATP pocket.

Belongs to the AAA ATPase family. BCS1 subfamily. The cofactor is Mg(2+).

It carries out the reaction ATP + H2O = ADP + phosphate + H(+). The chain is AAA-ATPase At3g28600 from Arabidopsis thaliana (Mouse-ear cress).